A 449-amino-acid polypeptide reads, in one-letter code: UDP-N-acetylmuramoylalanine--D-glutamate ligase (449 aa).

119-125 contributes to the ATP binding site; that stretch reads GTNGKTT.

The protein belongs to the MurCDEF family.

The protein resides in the cytoplasm. The catalysed reaction is UDP-N-acetyl-alpha-D-muramoyl-L-alanine + D-glutamate + ATP = UDP-N-acetyl-alpha-D-muramoyl-L-alanyl-D-glutamate + ADP + phosphate + H(+). It participates in cell wall biogenesis; peptidoglycan biosynthesis. Cell wall formation. Catalyzes the addition of glutamate to the nucleotide precursor UDP-N-acetylmuramoyl-L-alanine (UMA). This is UDP-N-acetylmuramoylalanine--D-glutamate ligase from Lactococcus lactis subsp. cremoris (strain MG1363).